The primary structure comprises 309 residues: Phytoene synthase (309 aa).

The protein belongs to the phytoene/squalene synthase family.

It carries out the reaction 2 (2E,6E,10E)-geranylgeranyl diphosphate = 15-cis-phytoene + 2 diphosphate. The protein operates within carotenoid biosynthesis; phytoene biosynthesis; all-trans-phytoene from geranylgeranyl diphosphate: step 1/1. Catalyzes the reaction from prephytoene diphosphate to phytoene. This chain is Phytoene synthase (crtB), found in Arthrospira platensis (Spirulina platensis).